The sequence spans 101 residues: Large ribosomal subunit protein bL28 (101 aa).

Belongs to the bacterial ribosomal protein bL28 family.

The chain is Large ribosomal subunit protein bL28 from Rhodopseudomonas palustris (strain BisB18).